The following is a 795-amino-acid chain: Protein translocase subunit SecA 2 (795 aa).

ATP-binding positions include glutamine 84, glycine 102–threonine 106, and aspartate 496.

The protein belongs to the SecA family. In terms of assembly, monomer and homodimer. Part of the essential Sec protein translocation apparatus which comprises SecA, SecYEG and auxiliary proteins SecDF. Other proteins may also be involved.

It localises to the cell membrane. It is found in the cytoplasm. It carries out the reaction ATP + H2O + cellular proteinSide 1 = ADP + phosphate + cellular proteinSide 2.. Part of the Sec protein translocase complex. Interacts with the SecYEG preprotein conducting channel. Has a central role in coupling the hydrolysis of ATP to the transfer of proteins into and across the cell membrane, serving as an ATP-driven molecular motor driving the stepwise translocation of polypeptide chains across the membrane. The protein is Protein translocase subunit SecA 2 of Streptococcus agalactiae serotype III (strain NEM316).